Consider the following 1405-residue polypeptide: DNA-directed RNA polymerase subunit beta' (1405 aa).

Residues C70, C72, C85, and C88 each coordinate Zn(2+). D460, D462, and D464 together coordinate Mg(2+). C814, C888, C895, and C898 together coordinate Zn(2+).

Belongs to the RNA polymerase beta' chain family. As to quaternary structure, the RNAP catalytic core consists of 2 alpha, 1 beta, 1 beta' and 1 omega subunit. When a sigma factor is associated with the core the holoenzyme is formed, which can initiate transcription. Mg(2+) serves as cofactor. It depends on Zn(2+) as a cofactor.

The catalysed reaction is RNA(n) + a ribonucleoside 5'-triphosphate = RNA(n+1) + diphosphate. Its function is as follows. DNA-dependent RNA polymerase catalyzes the transcription of DNA into RNA using the four ribonucleoside triphosphates as substrates. The protein is DNA-directed RNA polymerase subunit beta' of Wigglesworthia glossinidia brevipalpis.